The chain runs to 727 residues: Catalase-peroxidase (727 aa).

Residues 1–26 (MDTKVETGGKCPVAHGPAGAKGRGNR) form a disordered region. Residues 97-219 (WHSAGTYRIT…LGAVQMGLIY (123 aa)) constitute a cross-link (tryptophyl-tyrosyl-methioninium (Trp-Tyr) (with M-245)). The active-site Proton acceptor is His98. Residues 219 to 245 (YVNPEGPNGNPDPIAAARDIRETFSRM) constitute a cross-link (tryptophyl-tyrosyl-methioninium (Tyr-Met) (with W-97)). His260 lines the heme b pocket.

The protein belongs to the peroxidase family. Peroxidase/catalase subfamily. In terms of assembly, homodimer or homotetramer. Heme b serves as cofactor. Post-translationally, formation of the three residue Trp-Tyr-Met cross-link is important for the catalase, but not the peroxidase activity of the enzyme.

The enzyme catalyses H2O2 + AH2 = A + 2 H2O. The catalysed reaction is 2 H2O2 = O2 + 2 H2O. In terms of biological role, bifunctional enzyme with both catalase and broad-spectrum peroxidase activity. The protein is Catalase-peroxidase of Allorhizobium ampelinum (strain ATCC BAA-846 / DSM 112012 / S4) (Agrobacterium vitis (strain S4)).